The following is a 188-amino-acid chain: Large ribosomal subunit protein eL18A (188 aa).

The interval 153–188 (GKAPSTPHSRTKPYVLSKGRKFERARGRRASRGYKN) is disordered. Positions 178–188 (RGRRASRGYKN) are enriched in basic residues.

The protein belongs to the eukaryotic ribosomal protein eL18 family. In terms of assembly, component of the large ribosomal subunit.

It is found in the cytoplasm. Its function is as follows. Component of the large ribosomal subunit. The ribosome is a large ribonucleoprotein complex responsible for the synthesis of proteins in the cell. The polypeptide is Large ribosomal subunit protein eL18A (rpl18-a) (Xenopus laevis (African clawed frog)).